Reading from the N-terminus, the 357-residue chain is ATP-dependent 6-phosphofructokinase (357 aa).

ATP-binding positions include Gly-12, 80 to 81 (KG), and 107 to 110 (GDGS). Asp-108 is a Mg(2+) binding site. Residues 131 to 133 (TID), Arg-168, 175 to 177 (MGR), Glu-229, Arg-272, and 278 to 281 (HIQR) contribute to the substrate site. Asp-133 serves as the catalytic Proton acceptor.

The protein belongs to the phosphofructokinase type A (PFKA) family. Mixed-substrate PFK group III subfamily. Homodimer or homotetramer. It depends on Mg(2+) as a cofactor.

The protein resides in the cytoplasm. The catalysed reaction is beta-D-fructose 6-phosphate + ATP = beta-D-fructose 1,6-bisphosphate + ADP + H(+). The protein operates within carbohydrate degradation; glycolysis; D-glyceraldehyde 3-phosphate and glycerone phosphate from D-glucose: step 3/4. Its activity is regulated as follows. Subject to allosteric activation by ADP and other diphosphonucleosides, and inhibition by phosphoenolpyruvate. Functionally, catalyzes the phosphorylation of D-fructose 6-phosphate to fructose 1,6-bisphosphate by ATP, the first committing step of glycolysis. This chain is ATP-dependent 6-phosphofructokinase, found in Trichormus variabilis (strain ATCC 29413 / PCC 7937) (Anabaena variabilis).